A 164-amino-acid chain; its full sequence is MTEITFKGGPIHLKGQQINEGDFAPDFTVLDNDLNQVTLADYAGKKKLISVVPSIDTGVCDQQTRKFNSEASKEEGIVLTISADLPFAQKRWCASAGLDNVITLSDHRDLSFGENYGVVMEELRLLARAVFVLDVDNKVVYKEIVSEGTDFPDFDAALAAYKNI.

One can recognise a Thioredoxin domain in the interval 18–163; the sequence is INEGDFAPDF…FDAALAAYKN (146 aa). The Cysteine sulfenic acid (-SOH) intermediate role is filled by Cys-60. Cys-60 and Cys-93 are oxidised to a cystine.

The protein belongs to the peroxiredoxin family. Tpx subfamily. In terms of assembly, homodimer.

It carries out the reaction a hydroperoxide + [thioredoxin]-dithiol = an alcohol + [thioredoxin]-disulfide + H2O. In terms of biological role, thiol-specific peroxidase that catalyzes the reduction of hydrogen peroxide and organic hydroperoxides to water and alcohols, respectively. Plays a role in cell protection against oxidative stress by detoxifying peroxides. In Staphylococcus aureus (strain Mu50 / ATCC 700699), this protein is Thiol peroxidase.